The following is a 317-amino-acid chain: Beta-ketoacyl-[acyl-carrier-protein] synthase III (317 aa).

Active-site residues include Cys112 and His244. The interval 245-249 (QANLR) is ACP-binding. Asn274 is a catalytic residue.

The protein belongs to the thiolase-like superfamily. FabH family. In terms of assembly, homodimer.

Its subcellular location is the cytoplasm. The enzyme catalyses malonyl-[ACP] + acetyl-CoA + H(+) = 3-oxobutanoyl-[ACP] + CO2 + CoA. The protein operates within lipid metabolism; fatty acid biosynthesis. Functionally, catalyzes the condensation reaction of fatty acid synthesis by the addition to an acyl acceptor of two carbons from malonyl-ACP. Catalyzes the first condensation reaction which initiates fatty acid synthesis and may therefore play a role in governing the total rate of fatty acid production. Possesses both acetoacetyl-ACP synthase and acetyl transacylase activities. Its substrate specificity determines the biosynthesis of branched-chain and/or straight-chain of fatty acids. The protein is Beta-ketoacyl-[acyl-carrier-protein] synthase III of Salmonella typhimurium (strain LT2 / SGSC1412 / ATCC 700720).